Consider the following 455-residue polypeptide: Exodeoxyribonuclease 7 large subunit (455 aa).

It belongs to the XseA family. In terms of assembly, heterooligomer composed of large and small subunits.

The protein localises to the cytoplasm. The enzyme catalyses Exonucleolytic cleavage in either 5'- to 3'- or 3'- to 5'-direction to yield nucleoside 5'-phosphates.. Functionally, bidirectionally degrades single-stranded DNA into large acid-insoluble oligonucleotides, which are then degraded further into small acid-soluble oligonucleotides. The protein is Exodeoxyribonuclease 7 large subunit of Escherichia coli (strain SMS-3-5 / SECEC).